Here is a 284-residue protein sequence, read N- to C-terminus: NAD kinase (284 aa).

The active-site Proton acceptor is D61. NAD(+) contacts are provided by residues D61–G62, R66, N136–D137, R147, K164, D166, and L201.

It belongs to the NAD kinase family. Requires a divalent metal cation as cofactor.

The protein resides in the cytoplasm. It carries out the reaction NAD(+) + ATP = ADP + NADP(+) + H(+). In terms of biological role, involved in the regulation of the intracellular balance of NAD and NADP, and is a key enzyme in the biosynthesis of NADP. Catalyzes specifically the phosphorylation on 2'-hydroxyl of the adenosine moiety of NAD to yield NADP. The polypeptide is NAD kinase (Dehalococcoides mccartyi (strain CBDB1)).